Here is a 59-residue protein sequence, read N- to C-terminus: UPF0509 protein KPN78578_12530 (59 aa).

Belongs to the UPF0509 family.

The protein is UPF0509 protein KPN78578_12530 of Klebsiella pneumoniae subsp. pneumoniae (strain ATCC 700721 / MGH 78578).